Consider the following 217-residue polypeptide: tRNA (guanine-N(7)-)-methyltransferase (217 aa).

S-adenosyl-L-methionine contacts are provided by Glu-48, Glu-73, Asn-100, and Asp-123. The active site involves Asp-123. 2 residues coordinate substrate: Lys-127 and Asp-159.

It belongs to the class I-like SAM-binding methyltransferase superfamily. TrmB family.

It carries out the reaction guanosine(46) in tRNA + S-adenosyl-L-methionine = N(7)-methylguanosine(46) in tRNA + S-adenosyl-L-homocysteine. It participates in tRNA modification; N(7)-methylguanine-tRNA biosynthesis. In terms of biological role, catalyzes the formation of N(7)-methylguanine at position 46 (m7G46) in tRNA. In Leptospira interrogans serogroup Icterohaemorrhagiae serovar Lai (strain 56601), this protein is tRNA (guanine-N(7)-)-methyltransferase.